A 489-amino-acid polypeptide reads, in one-letter code: Glutamate--tRNA ligase (489 aa).

A 'HIGH' region motif is present at residues 12-22 (PSPTGIPHVGM). The 'KMSKS' region signature appears at 256-260 (KLSKR). Lys259 is a binding site for ATP.

The protein belongs to the class-I aminoacyl-tRNA synthetase family. Glutamate--tRNA ligase type 1 subfamily. Monomer.

Its subcellular location is the cytoplasm. It carries out the reaction tRNA(Glu) + L-glutamate + ATP = L-glutamyl-tRNA(Glu) + AMP + diphosphate. Functionally, catalyzes the attachment of glutamate to tRNA(Glu) in a two-step reaction: glutamate is first activated by ATP to form Glu-AMP and then transferred to the acceptor end of tRNA(Glu). The protein is Glutamate--tRNA ligase of Mycobacterium ulcerans (strain Agy99).